Consider the following 287-residue polypeptide: Pyridoxal kinase PdxY (287 aa).

Substrate is bound by residues serine 10 and 45–46 (TQ). Residues aspartate 112, alanine 144, glutamate 149, lysine 182, and 209–212 (RPLV) contribute to the ATP site. Aspartate 224 lines the substrate pocket.

Belongs to the pyridoxine kinase family. PdxY subfamily. Homodimer. Requires Mg(2+) as cofactor.

It catalyses the reaction pyridoxal + ATP = pyridoxal 5'-phosphate + ADP + H(+). It functions in the pathway cofactor metabolism; pyridoxal 5'-phosphate salvage; pyridoxal 5'-phosphate from pyridoxal: step 1/1. Functionally, pyridoxal kinase involved in the salvage pathway of pyridoxal 5'-phosphate (PLP). Catalyzes the phosphorylation of pyridoxal to PLP. This is Pyridoxal kinase PdxY from Shigella dysenteriae serotype 1 (strain Sd197).